The chain runs to 185 residues: Elongation factor P (185 aa).

It belongs to the elongation factor P family.

It localises to the cytoplasm. It functions in the pathway protein biosynthesis; polypeptide chain elongation. Involved in peptide bond synthesis. Stimulates efficient translation and peptide-bond synthesis on native or reconstituted 70S ribosomes in vitro. Probably functions indirectly by altering the affinity of the ribosome for aminoacyl-tRNA, thus increasing their reactivity as acceptors for peptidyl transferase. The polypeptide is Elongation factor P (Staphylococcus carnosus (strain TM300)).